A 251-amino-acid chain; its full sequence is uncharacterized protein (251 aa).

His-5, His-7, Glu-101, His-132, His-163, and Asp-209 together coordinate a divalent metal cation.

It belongs to the metallo-dependent hydrolases superfamily. TatD-type hydrolase family. It depends on a divalent metal cation as a cofactor.

This is an uncharacterized protein from Methanocaldococcus jannaschii (strain ATCC 43067 / DSM 2661 / JAL-1 / JCM 10045 / NBRC 100440) (Methanococcus jannaschii).